The following is a 415-amino-acid chain: Casein kinase I isoform delta (415 aa).

The Protein kinase domain occupies 9 to 277; it reads YRLGRKIGSG…YLRQLFRNLF (269 aa). ATP-binding positions include 15–23 and Lys-38; that span reads IGSGSFGDI. Asp-128 serves as the catalytic Proton acceptor. Residues 278 to 364 form a centrosomal localization signal (CLS) region; sequence HRQGFSYDYV…TSPRPVSGME (87 aa). Residues 301-315 show a composition bias toward basic and acidic residues; the sequence is ADDAERERRDREERL. The interval 301 to 415 is disordered; that stretch reads ADDAERERRD…SSGLQSVVHR (115 aa). An autoinhibitory region spans residues 317 to 342; the sequence is HSRNPATRGLPSTASGRLRGTQEVAP. Phosphoserine occurs at positions 328 and 331. Residues 347–358 are compositionally biased toward polar residues; it reads TPTSHTANTSPR. Ser-370 is subject to Phosphoserine. An Omega-N-methylarginine modification is found at Arg-375. A compositionally biased stretch (polar residues) spans 380-400; that stretch reads NVSSSDLTGRQDTSRMSTSQI. A phosphoserine mark is found at Ser-382, Ser-383, Ser-384, Pro-401, Ser-407, and Ser-411.

The protein belongs to the protein kinase superfamily. CK1 Ser/Thr protein kinase family. Casein kinase I subfamily. In terms of assembly, monomer. Component of the circadian core oscillator, which includes the CRY proteins, CLOCK, or NPAS2, BMAL1 or BMAL2, CSNK1D and/or CSNK1E, TIMELESS and the PER proteins. Interacts directly with PER1 and PER2 which may lead to their degradation. Interacts with MAP1A. Interacts with MAPT/TAU, DBNDD2, AIB1/NCOA3 and ESR1. Interacts with AKAP9/AKAP450; this interaction promotes centrosomal subcellular location. Binds to tubulins in mitotic cells upon DNA damage. Interacts with GJA1. Interacts with SNAPIN. Interacts with DNMT1. Interacts with DDX3X; this interaction enhances CSNK1D kinase activity in vitro, but it is unclear whether this interaction is physiologically relevant. Interacts with FAM83A, FAM83B, FAM83E and FAM83H (via DUF1669). Autophosphorylated on serine and threonine residues; this autophosphorylation represses activity. Reactivated by phosphatase-mediated dephosphorylation. May be dephosphorylated by PP1. Expressed ubiquitously. However, kinase activity is not uniform, with highest kinase activity in splenocytes.

It localises to the cytoplasm. The protein localises to the nucleus. It is found in the cytoskeleton. The protein resides in the microtubule organizing center. Its subcellular location is the centrosome. It localises to the perinuclear region. The protein localises to the cell membrane. It is found in the spindle. The protein resides in the golgi apparatus. The enzyme catalyses L-seryl-[protein] + ATP = O-phospho-L-seryl-[protein] + ADP + H(+). It catalyses the reaction L-threonyl-[protein] + ATP = O-phospho-L-threonyl-[protein] + ADP + H(+). The catalysed reaction is L-seryl-[tau protein] + ATP = O-phospho-L-seryl-[tau protein] + ADP + H(+). It carries out the reaction L-threonyl-[tau protein] + ATP = O-phospho-L-threonyl-[tau protein] + ADP + H(+). Exhibits substrate-dependent heparin activation. Drug-mediated inhibition leads to a delay of the oscillations with the magnitude of this effect dependent upon the timing of drug administration. Inhibited by phosphorylation. Functionally, essential serine/threonine-protein kinase that regulates diverse cellular growth and survival processes including Wnt signaling, DNA repair and circadian rhythms. It can phosphorylate a large number of proteins. Casein kinases are operationally defined by their preferential utilization of acidic proteins such as caseins as substrates. Phosphorylates connexin-43/GJA1, MAP1A, SNAPIN, MAPT/TAU, TOP2A, DCK, HIF1A, EIF6, p53/TP53, DVL2, DVL3, ESR1, AIB1/NCOA3, DNMT1, PKD2, YAP1, PER1 and PER2. Central component of the circadian clock. In balance with PP1, determines the circadian period length through the regulation of the speed and rhythmicity of PER1 and PER2 phosphorylation. Controls PER1 and PER2 nuclear transport and degradation. YAP1 phosphorylation promotes its SCF(beta-TRCP) E3 ubiquitin ligase-mediated ubiquitination and subsequent degradation. DNMT1 phosphorylation reduces its DNA-binding activity. Phosphorylation of ESR1 and AIB1/NCOA3 stimulates their activity and coactivation. Phosphorylation of DVL2 and DVL3 regulates WNT3A signaling pathway that controls neurite outgrowth. Phosphorylates NEDD9/HEF1. EIF6 phosphorylation promotes its nuclear export. Triggers down-regulation of dopamine receptors in the forebrain. Activates DCK in vitro by phosphorylation. TOP2A phosphorylation favors DNA cleavable complex formation. May regulate the formation of the mitotic spindle apparatus in extravillous trophoblast. Modulates connexin-43/GJA1 gap junction assembly by phosphorylation. Probably involved in lymphocyte physiology. Regulates fast synaptic transmission mediated by glutamate. The sequence is that of Casein kinase I isoform delta (Csnk1d) from Mus musculus (Mouse).